We begin with the raw amino-acid sequence, 584 residues long: Transcription factor COE1 (584 aa).

The residue at position 1 (Met-1) is an N-acetylmethionine. Residues 1–14 (MFGIQESIQRSGSS) are compositionally biased toward polar residues. The interval 1-21 (MFGIQESIQRSGSSMKEEPLG) is disordered. Lys-16 is covalently cross-linked (Glycyl lysine isopeptide (Lys-Gly) (interchain with G-Cter in SUMO1); alternate). Lys-16 is covalently cross-linked (Glycyl lysine isopeptide (Lys-Gly) (interchain with G-Cter in SUMO2); alternate). Residues 63–66 (RKSN) are interaction with DNA. Residues 151–170 (CRVLLTHEIMCSRCCDKKSC) form a C5-type zinc finger. Interaction with DNA regions lie at residues 197–204 (NCLKNAGN) and 236–239 (NNSK). The 84-residue stretch at 255-338 (PCIKAISPSE…KGTPGRFIYT (84 aa)) folds into the IPT/TIG domain. The disordered stretch occupies residues 450 to 473 (GFTRNSSSVSPHGYVPSTTPQQTN).

The protein belongs to the COE family. As to quaternary structure, homodimer. Interacts with ZNF423 and ZNF521, leading to prevent EBF1 to bind DNA and activate target genes. Interacts with CCR4-NOT component CNOT3. Expressed exclusively in olfactory receptor neurons and their precursors.

Its subcellular location is the nucleus. Functionally, key pioneer transcription factor of B-cell specification and commitment. Recognizes variations of the palindromic sequence 5'-ATTCCCNNGGGAATT-3'. Operates in a transcription factor network to activate B-cell-specific genes and repress genes associated with alternative cell fates. For instance, positively regulates many B-cell specific genes including BCR or CD40 while repressing genes that direct cells into alternative lineages, including GATA3 and TCF7 for the T-cell lineage. In addition to its role during lymphopoiesis, controls the thermogenic gene program in adipocytes during development and in response to environmental cold. The sequence is that of Transcription factor COE1 (Ebf1) from Rattus norvegicus (Rat).